The following is a 330-amino-acid chain: Polyprenal reductase (330 aa).

Residues 1–16 (MAGWAGFELSALNPLR) lie on the Cytoplasmic side of the membrane. Residues 17 to 37 (TLWLALAAAFLFALLLQLAPA) traverse the membrane as a helical segment. Residues 38-80 (RLLPSCALFQDLLRYGKTKQSGSRRPAVCRAFDVPKRYFSHFY) lie on the Lumenal side of the membrane. The chain crosses the membrane as a helical span at residues 81-101 (VISVVWNGSLLWLLSQSLFLG). Topologically, residues 102–132 (APFPNWLSALLRTLGATQFQALEMESKASRM) are cytoplasmic. The helical transmembrane segment at 133 to 153 (PAAELALSAFLVLVFLWVHSL) threads the bilayer. Over 154–169 (RRLFECFYVSVFSNAA) the chain is Lumenal. A helical transmembrane segment spans residues 170–190 (IHVVQYCFGLVYYVLVGLTVL). Over 191 to 206 (SQVPMDDKNVYVLGKN) the chain is Cytoplasmic. The chain crosses the membrane as a helical span at residues 207 to 227 (LLIQARWFHILGMVMFFWSSA). Over 228–277 (HQYKCHVILSNLRRNKKGVVIHCQHRIPFGDWFEYVSSANYLAELMIYIS) the chain is Lumenal. A helical membrane pass occupies residues 278 to 298 (MAVTFGLHNLTWWLVVTYVFS). Residues 299–330 (SQALSAFFNHKFYRSTFVSYPKHRKAFLPFLF) are Cytoplasmic-facing.

The protein belongs to the steroid 5-alpha reductase family. Polyprenal reductase subfamily.

It is found in the endoplasmic reticulum membrane. It catalyses the reaction a di-trans,poly-cis-dolichal + NADP(+) = a di-trans,poly-cis-polyprenal + NADPH + H(+). The catalysed reaction is a 3-oxo-5alpha-steroid + NADP(+) = a 3-oxo-Delta(4)-steroid + NADPH + H(+). It carries out the reaction androst-4-ene-3,17-dione + NADPH + H(+) = 5alpha-androstan-3,17-dione + NADP(+). The enzyme catalyses 17beta-hydroxy-5alpha-androstan-3-one + NADP(+) = testosterone + NADPH + H(+). The protein operates within protein modification; protein glycosylation. Its function is as follows. Plays a key role in early steps of protein N-linked glycosylation by being involved in the conversion of polyprenol into dolichol. Acts as a polyprenal reductase that mediates the reduction of polyprenal into dolichal in a NADP-dependent mechanism. Dolichols are required for the synthesis of dolichol-linked monosaccharides and the oligosaccharide precursor used for N-glycosylation. Also able to convert testosterone (T) into 5-alpha-dihydrotestosterone (DHT). The chain is Polyprenal reductase from Mus musculus (Mouse).